We begin with the raw amino-acid sequence, 169 residues long: Peptide deformylase (169 aa).

Residues Cys91 and His133 each coordinate Fe cation. Glu134 is an active-site residue. His137 lines the Fe cation pocket.

The protein belongs to the polypeptide deformylase family. Fe(2+) is required as a cofactor.

The enzyme catalyses N-terminal N-formyl-L-methionyl-[peptide] + H2O = N-terminal L-methionyl-[peptide] + formate. Its function is as follows. Removes the formyl group from the N-terminal Met of newly synthesized proteins. Requires at least a dipeptide for an efficient rate of reaction. N-terminal L-methionine is a prerequisite for activity but the enzyme has broad specificity at other positions. This is Peptide deformylase from Serratia proteamaculans (strain 568).